The following is a 591-amino-acid chain: Pentatricopeptide repeat-containing protein At3g47530 (591 aa).

PPR repeat units lie at residues 76 to 110 (TLSH…SSLP), 112 to 146 (NPLS…GFLS), 147 to 177 (DSLL…IPKR), 178 to 208 (DTVS…MKND), 216 to 250 (DGVT…GLSG), 251 to 281 (ALNL…MRER), 282 to 316 (NVVS…GISP), 317 to 351 (EEQT…EFKI), and 354 to 384 (NLHH…MEMK). Positions 389 to 464 (IWRTLLGACR…KPGCSAIELQ (76 aa)) are type E motif. A type E(+) motif region spans residues 465-495 (GTVHEFIVDDVSHPRKEEIYKMLAEINQQLK). The interval 496–591 (IAGYVAEITS…GGSCSCNDFW (96 aa)) is type DYW motif.

This sequence belongs to the PPR family. PCMP-H subfamily.

The protein is Pentatricopeptide repeat-containing protein At3g47530 (PCMP-H76) of Arabidopsis thaliana (Mouse-ear cress).